The sequence spans 79 residues: Large ribosomal subunit protein uL24 (79 aa).

Belongs to the universal ribosomal protein uL24 family. As to quaternary structure, part of the 50S ribosomal subunit.

In terms of biological role, one of two assembly initiator proteins, it binds directly to the 5'-end of the 23S rRNA, where it nucleates assembly of the 50S subunit. Functionally, one of the proteins that surrounds the polypeptide exit tunnel on the outside of the subunit. The chain is Large ribosomal subunit protein uL24 from Lactobacillus delbrueckii subsp. bulgaricus (strain ATCC BAA-365 / Lb-18).